The following is a 1582-amino-acid chain: Adhesion G protein-coupled receptor B1 (1582 aa).

The N-terminal stretch at 1–33 is a signal peptide; it reads MRGQAAAPGPIWILAPLLLLLLLLGRWARAASG. Topologically, residues 34–948 are extracellular; sequence ADIGPGTEQC…ATMDKVTVPS (915 aa). An N-linked (GlcNAc...) asparagine glycan is attached at Asn-64. Residues 261-315 enclose the TSP type-1 1 domain; the sequence is AGGWKLWSLWGECTRDCGGGLQTRTRTCLPTLGVEGGGCEGVLEEGRLCNRKACG. 3 disulfides stabilise this stretch: Cys-273-Cys-309, Cys-277-Cys-314, and Cys-288-Cys-299. Residues 313–335 are disordered; the sequence is ACGPTGRSSSRSQSLRSTDARRR. Low complexity predominate over residues 319–329; it reads RSSSRSQSLRS. TSP type-1 domains are found at residues 354-407, 409-462, 467-520, and 522-575; these read DPAA…AVCP, HGAW…ALCP, DGNW…QQCP, and DGKW…QRCP. Cystine bridges form between Cys-366/Cys-400, Cys-370/Cys-406, Cys-381/Cys-390, Cys-421/Cys-456, Cys-425/Cys-461, Cys-436/Cys-446, Cys-479/Cys-514, Cys-483/Cys-519, Cys-494/Cys-504, Cys-534/Cys-569, Cys-538/Cys-574, Cys-549/Cys-559, Cys-581/Cys-616, and Cys-604/Cys-634. N-linked (GlcNAc...) asparagine glycosylation occurs at Asn-401. Asn-607 carries an N-linked (GlcNAc...) asparagine glycan. Phosphothreonine is present on Thr-609. N-linked (GlcNAc...) asparagine glycosylation is found at Asn-692, Asn-844, Asn-877, and Asn-881. Residues 760–939 form the GAIN-B domain; that stretch reads RDAYQVTDNL…AILAQLSADA (180 aa). Cystine bridges form between Cys-884-Cys-921 and Cys-909-Cys-923. Residues 884-939 form a GPS region; it reads CILWDETDGPSSSAPPQLGPWSWRGCRTVPLDALRTRCLCDRLSTFAILAQLSADA. Residues 927–943 are N-terminal stalk following vasculostatin-120 cleavage which is not required for signaling activity; it reads STFAILAQLSADATMDK. Residues 949–969 traverse the membrane as a helical segment; that stretch reads VTLIVGCGVSSLTLLMLVIIY. Over 970–980 the chain is Cytoplasmic; it reads VSVWRYIRSER. Residues 981–1001 form a helical membrane-spanning segment; that stretch reads SVILINFCLSIISSNALILIG. Over 1002 to 1008 the chain is Extracellular; it reads QTQTRNK. Residues 1009–1029 traverse the membrane as a helical segment; that stretch reads VVCTLVAAFLHFFFLSSFCWV. Topologically, residues 1030-1052 are cytoplasmic; sequence LTEAWQSYMAVTGRLRSRLVRKR. Residues 1053 to 1073 traverse the membrane as a helical segment; sequence FLCLGWGLPALVVAISVGFTK. The Extracellular portion of the chain corresponds to 1074 to 1093; that stretch reads AKGYSTMNYCWLSLEGGLLY. The helical transmembrane segment at 1094-1114 threads the bilayer; that stretch reads AFVGPAAAVVLVNMVIGILVF. The Cytoplasmic segment spans residues 1115-1136; that stretch reads NKLVSKDGITDKKLKERAGASL. Residues 1137–1157 traverse the membrane as a helical segment; sequence WSSCVVLPLLALTWMSAVLAV. The Extracellular portion of the chain corresponds to 1158–1166; it reads TDRRSALFQ. Residues 1167–1187 traverse the membrane as a helical segment; it reads ILFAVFDSLEGFVIVMVHCIL. Over 1188 to 1582 the chain is Cytoplasmic; sequence RREVQDAVKC…QDIIDLQTEV (395 aa). The segment at 1363–1582 is involved in interaction with MAGI1; sequence YSINIDQMPQ…QDIIDLQTEV (220 aa). Residues 1382-1549 form a disordered region; it reads PDASFPTRSP…AWVKKELEPL (168 aa). Pro residues predominate over residues 1389-1435; sequence RSPPAREPPGGAPPEVPPVQPPPPPPPPPPPPQQPIPPPPTLEPAPP. The segment covering 1441 to 1455 has biased composition (low complexity); sequence GEPAAHPGPSSGAGA. Ser-1467 is modified (phosphoserine). Composition is skewed to basic and acidic residues over residues 1468–1484 and 1491–1520; these read LERR…EKIM and QDMF…KPEK. Positions 1579–1582 are indispensable for interaction with MAGI1; that stretch reads QTEV.

This sequence belongs to the G-protein coupled receptor 2 family. LN-TM7 subfamily. As to quaternary structure, interacts with ELMO1 and DOCK1. When bound to ELMO1 and DOCK1, acts as a module to promote apoptotic cell engulfment. Interacts with MDM2; the interaction results in inhibition of MDM2-mediated ubiquitination and degradation of DLG4/PSD95. Interacts with PARD3 and TIAM1; the interaction is required for correct dendritic localization of PARD3 and TIAM1 and for dendritic spine formation. Interacts with MAGI1, MAGI3 and BAIAP2. Interacts with PHYHIP. Interacts with DLG4 (via PDZ domain). Vasculostatin-120: Interacts with CD36. Vasculostatin-120: Interacts with ARRB2. Interacts with BAIAP3; this interaction is direct. In terms of processing, proteolytically cleaved to produce vasculostatin-40 and vasculostatin-120. Vasculostatin-40 is the major form and is produced through proteolytic cleavage by MMP14 between residues 321 and 329 with cleavage likely to be between Ser-326 and Leu-327. Ubiquitinated. As to expression, in brain, widespread expression in all neuropil-rich zones including spinal cord gray matter, cerebellar molecular layer, cerebral cortex, thalamic nuclei and basal ganglia with no expression in white matter (at protein level). In the cerebellar molecular layer, highly expressed in interneuron processes whereas Purkinje cells and their dendrites show weaker expression (at protein level). In the olfactory bulb, highly expressed in glomeruli (at protein level). In the retina, highly concentrated in the outer and inner plexiform layers (at protein level). Expressed in brain. Enriched in hippocampus and cortex. Also detected in other tissues including bone marrow and spleen.

It localises to the cell membrane. The protein localises to the cell projection. The protein resides in the phagocytic cup. Its subcellular location is the cell junction. It is found in the focal adhesion. It localises to the dendritic spine. The protein localises to the postsynaptic density. The protein resides in the secreted. Phosphatidylserine receptor which enhances the engulfment of apoptotic cells. Also mediates the binding and engulfment of Gram-negative bacteria. Stimulates production of reactive oxygen species by macrophages in response to Gram-negative bacteria, resulting in enhanced microbicidal macrophage activity. In the gastric mucosa, required for recognition and engulfment of apoptotic gastric epithelial cells. Promotes myoblast fusion. Activates the Rho pathway in a G-protein-dependent manner. Inhibits MDM2-mediated ubiquitination and degradation of DLG4/PSD95, promoting DLG4 stability and regulating synaptic plasticity. Required for the formation of dendritic spines by ensuring the correct localization of PARD3 and TIAM1. Potent inhibitor of angiogenesis in brain and may play a significant role as a mediator of the p53/TP53 signal in suppression of glioblastoma. In terms of biological role, inhibits angiogenesis in a CD36-dependent manner. Its function is as follows. Inhibits angiogenesis. The chain is Adhesion G protein-coupled receptor B1 from Mus musculus (Mouse).